An 81-amino-acid chain; its full sequence is Ferredoxin (81 aa).

In terms of domain architecture, 4Fe-4S ferredoxin-type spans 2–30; it reads KYTIVDKETCIACGACGAAAPDIYDYDED. [4Fe-4S] cluster is bound by residues Cys11, Cys14, Cys17, and Cys61.

Requires [4Fe-4S] cluster as cofactor.

In terms of biological role, ferredoxins are iron-sulfur proteins that transfer electrons in a wide variety of metabolic reactions. This Bacillus thermoproteolyticus protein is Ferredoxin.